We begin with the raw amino-acid sequence, 324 residues long: Probable carboxylesterase 9 (324 aa).

The Involved in the stabilization of the negatively charged intermediate by the formation of the oxyanion hole signature appears at 86–88 (HGS). Active-site residues include serine 171, aspartate 272, and histidine 302.

This sequence belongs to the 'GDXG' lipolytic enzyme family. Expressed in flowers.

The catalysed reaction is a carboxylic ester + H2O = an alcohol + a carboxylate + H(+). Functionally, carboxylesterase acting on esters with varying acyl chain length. This is Probable carboxylesterase 9 (CXE9) from Arabidopsis thaliana (Mouse-ear cress).